Consider the following 208-residue polypeptide: MPSHCRERLPFALHFFAVAYGASLWILGSHGLAAANPACSARDDLSANMTISWTEIRAGCDAERTAYREQNPVGSSWFANAGNGFTGAPYLLQRVLPDLAPEIWGRNDENFGRFGFFPDPDDKSRPLPLGLGIASTAGRPLDAGGNPLGEIDFAKPGLDVVTLACGPHWTGTDAGWTGGRRGCAEHEDGRAQVAGCLLANGDSLLLHP.

Residues 1–34 form the signal peptide; the sequence is MPSHCRERLPFALHFFAVAYGASLWILGSHGLAA.

This is an uncharacterized protein from Sinorhizobium fredii (strain NBRC 101917 / NGR234).